A 73-amino-acid polypeptide reads, in one-letter code: EAGEECDCGSPANPCCDAATCKLRPGAQCADGLCCDQCRFIKKGTVCRVARGDWNDDTCTGQSADCPRNGLYG.

The Disintegrin domain occupies 1–73 (EAGEECDCGS…ADCPRNGLYG (73 aa)). Cystine bridges form between Cys-6-Cys-21, Cys-8-Cys-16, Cys-15-Cys-38, Cys-29-Cys-35, Cys-34-Cys-59, and Cys-47-Cys-66. A Cell attachment site motif is present at residues 51-53 (RGD).

This sequence belongs to the venom metalloproteinase (M12B) family. P-II subfamily. P-IIa sub-subfamily. As to quaternary structure, monomer (disintegrin). Expressed by the venom gland.

It localises to the secreted. Functionally, inhibits fibrinogen interaction with platelets. Acts by binding to alpha-IIb/beta-3 (ITGA2B/ITGB3) on the platelet surface and inhibits aggregation induced by ADP, thrombin, platelet-activating factor and collagen. This is Disintegrin lutosin from Crotalus lutosus (Great basin rattlesnake).